The primary structure comprises 773 residues: Disintegrin and metalloproteinase domain-containing protein 11 (773 aa).

The first 24 residues, 1 to 24 (MRRLRRWAIAALLLLPLLPPPGLG), serve as a signal peptide directing secretion. A propeptide spanning residues 25-229 (ALGPRGALHW…PNWPKLRRKR (205 aa)) is cleaved from the precursor. A disordered region spans residues 36-82 (SSAHVGSPESPEGSEVTEPSRLVRQSSGGEVRKPQLDTRVRQDPPRG). The segment covering 65–79 (EVRKPQLDTRVRQDP) has biased composition (basic and acidic residues). Asparagine 100 and asparagine 167 each carry an N-linked (GlcNAc...) asparagine glycan. Over 230–738 (QVRRGHPTVH…ERYKGPSGTN (509 aa)) the chain is Extracellular. One can recognise a Peptidase M12B domain in the interval 243 to 442 (KYVELIVIND…GGGSCLFNKP (200 aa)). The interval 336–773 (GRTFQSTSSG…NIRRGRSGGA (438 aa)) is required for localization to cerebellar cortex basket cell terminals. Also required for localization of KCNA1, KCNA2, DLG4 and ADAM22 to cerebellar cortex basket cell terminal perisomatic axons and pinceaux. Disulfide bonds link cysteine 353/cysteine 437, cysteine 396/cysteine 421, cysteine 398/cysteine 405, and cysteine 507/cysteine 527. The region spanning 448–535 (PPECGNGFVE…QCPPNLHKLD (88 aa)) is the Disintegrin domain. N-linked (GlcNAc...) asparagine glycosylation is found at asparagine 609 and asparagine 677. Disulfide bonds link cysteine 681–cysteine 696, cysteine 690–cysteine 702, and cysteine 704–cysteine 713. The EGF-like domain maps to 681–713 (CPGSGERRICSHHGVCSNEGKCICQPDWTGKDC). The chain crosses the membrane as a helical span at residues 739–759 (IIIGSIAGAVLVAAIVLGGTG). The Cytoplasmic portion of the chain corresponds to 760–773 (WGFKNIRRGRSGGA).

Interacts with LGI1 and LGI4. Interacts with KCNA1/KV1.1, KCNA2/KV1.2, DLG4/PSD-95 and ADAM22. The precursor is cleaved by a furin endopeptidase. As to expression, abundantly expressed in cerebellar cortex basket cell terminals and pinceaux, weakly expressed in Purkinje cells (at protein level). Weakly expressed in the heart. Abundantly in expressed in neurons throughout the central nervous system including the telencephalon, diencephalic and brainstem nuclei, cerebellum and spinal cord. Expressed in the peripheral nervous system trigeminal and dorsal root ganglia. Expressed in the ganglion and bipolar cells of the retinae and weakly in the cornea of the eyes. Expressed in the hepatocytes of the parenchyma and hepatic lobules of the liver. Expressed in distinct focal areas in the juxtamedullary cortex of the kidney. Expressed in spermatocytes in the seminiferous tubules of the testes. Expressed in the stratum spinosum of the stratified squamous epithelia of the tongue and esophagus.

The protein localises to the presynaptic cell membrane. It is found in the perikaryon. It localises to the cell projection. Its subcellular location is the axon. In terms of biological role, probable ligand for integrin in the brain. This is a non catalytic metalloprotease-like protein. Required for localization of the potassium channel subunit proteins KCNA1/KV1.1 and KCNA2/KV1.2 at cerebellar cortex basket cell distal terminals, is thereby involved in ephaptic inhibitory synchronization of Purkinje cell firing and response to stress. Plays a role in spatial learning and motor coordination. Involved in the nociceptive pain response to chemical-derived stimulation. This Mus musculus (Mouse) protein is Disintegrin and metalloproteinase domain-containing protein 11 (Adam11).